A 132-amino-acid polypeptide reads, in one-letter code: UPF0102 protein Acid_2433 (132 aa).

It belongs to the UPF0102 family.

This is UPF0102 protein Acid_2433 from Solibacter usitatus (strain Ellin6076).